The following is a 51-amino-acid chain: MAAKKSFIIKQKLAKAKNQNRPLPQWFRLKTNNTIRYNAKRRHWRRTKLVC.

Belongs to the eukaryotic ribosomal protein eL39 family. In terms of assembly, interacts with YIH1.

In Kluyveromyces marxianus (Yeast), this protein is Large ribosomal subunit protein eL39 (RPL39).